Here is a 419-residue protein sequence, read N- to C-terminus: D-mannonate dehydratase (419 aa).

Substrate-binding residues include Asn-54 and His-139. The Proton donor/acceptor role is filled by Tyr-176. Asp-227 contributes to the Mg(2+) binding site. The active-site Proton donor/acceptor is His-229. Glu-253 and Glu-279 together coordinate Mg(2+). Glu-279, Arg-300, His-329, Asp-333, and Glu-356 together coordinate substrate.

Belongs to the mandelate racemase/muconate lactonizing enzyme family. GalD subfamily. Mg(2+) is required as a cofactor.

It carries out the reaction D-mannonate = 2-dehydro-3-deoxy-D-gluconate + H2O. The protein operates within carbohydrate metabolism; pentose and glucuronate interconversion. Catalyzes the dehydration of D-mannonate. Has no detectable activity with a panel of 70 other acid sugars (in vitro). The chain is D-mannonate dehydratase from Xanthomonas oryzae pv. oryzicola (strain BLS256).